Reading from the N-terminus, the 671-residue chain is Annexin A6 (671 aa).

8 Annexin repeats span residues 18–89 (FNAS…SLMR), 90–161 (PPAY…VLLQ), 173–245 (DLVE…AVVK), 249–320 (STAE…KLCE), 361–432 (FNDD…GLML), 433–504 (TPAQ…SLAL), 519–594 (EDAK…AIVR), and 598–669 (NKPA…LCGG).

It belongs to the annexin family.

It localises to the cytoplasm. The protein localises to the melanosome. In terms of biological role, may associate with CD21. May regulate the release of Ca(2+) from intracellular stores. This chain is Annexin A6 (ANXA6), found in Gallus gallus (Chicken).